A 209-amino-acid chain; its full sequence is Large ribosomal subunit protein bL25 (209 aa).

Residues 190 to 209 (GLKSADDEAEGEDAEEAAAE) are disordered. Acidic residues predominate over residues 196 to 209 (DEAEGEDAEEAAAE).

It belongs to the bacterial ribosomal protein bL25 family. CTC subfamily. In terms of assembly, part of the 50S ribosomal subunit; part of the 5S rRNA/L5/L18/L25 subcomplex. Contacts the 5S rRNA. Binds to the 5S rRNA independently of L5 and L18.

This is one of the proteins that binds to the 5S RNA in the ribosome where it forms part of the central protuberance. This is Large ribosomal subunit protein bL25 from Ruegeria sp. (strain TM1040) (Silicibacter sp.).